The primary structure comprises 349 residues: Anthranilate phosphoribosyltransferase (349 aa).

Residues G82, 85–86, 92–95, 110–118, and S122 contribute to the 5-phospho-alpha-D-ribose 1-diphosphate site; these read GD, NVST, and KHGNRAVSG. G82 is a binding site for anthranilate. S94 is a Mg(2+) binding site. Anthranilate is bound at residue N113. Residue R168 participates in anthranilate binding. Residues D227 and E228 each coordinate Mg(2+).

The protein belongs to the anthranilate phosphoribosyltransferase family. As to quaternary structure, homodimer. Mg(2+) serves as cofactor.

The enzyme catalyses N-(5-phospho-beta-D-ribosyl)anthranilate + diphosphate = 5-phospho-alpha-D-ribose 1-diphosphate + anthranilate. It participates in amino-acid biosynthesis; L-tryptophan biosynthesis; L-tryptophan from chorismate: step 2/5. Its function is as follows. Catalyzes the transfer of the phosphoribosyl group of 5-phosphorylribose-1-pyrophosphate (PRPP) to anthranilate to yield N-(5'-phosphoribosyl)-anthranilate (PRA). The sequence is that of Anthranilate phosphoribosyltransferase from Pseudomonas fluorescens (strain SBW25).